The sequence spans 671 residues: Transcriptional regulator Kaiso (671 aa).

Residues 1–103 (MESRKLISAT…RADLLDELIK (103 aa)) are interaction with NCOR1. The interval 1 to 136 (MESRKLISAT…SGTEQDGTAE (136 aa)) is self-association. The 63-residue stretch at 32–94 (CDVTVIVEDR…IYSSKVVRVR (63 aa)) folds into the BTB domain. Positions 127-144 (SGTEQDGTAETLPSSSSD) are enriched in polar residues. Residues 127 to 161 (SGTEQDGTAETLPSSSSDKSLDMEKSKDEAQDNGA) form a disordered region. The segment covering 145–156 (KSLDMEKSKDEA) has biased composition (basic and acidic residues). Glycyl lysine isopeptide (Lys-Gly) (interchain with G-Cter in SUMO2) cross-links involve residues lysine 151 and lysine 153. Threonine 251 is subject to Phosphothreonine. The tract at residues 298-571 (LPNHMSSSVN…FMSSHIKSVH (274 aa)) is interaction with CBFA2T3. A disordered region spans residues 332-365 (IIDDDDDIISSSPDSAVSNTSLVPQADNSKSTTL). Residues 347-365 (AVSNTSLVPQADNSKSTTL) show a composition bias toward polar residues. Residues lysine 388, lysine 405, lysine 412, and lysine 447 each participate in a glycyl lysine isopeptide (Lys-Gly) (interchain with G-Cter in SUMO2) cross-link. Basic and acidic residues predominate over residues 451–461 (DGGEAKLDNEL). Residues 451 to 474 (DGGEAKLDNELPKTSGSEPPNKRM) are disordered. An interaction with CTNND1 region spans residues 452–671 (GGEAKLDNEL…EFEFIIPESY (220 aa)). Residues lysine 463, lysine 472, and lysine 477 each participate in a glycyl lysine isopeptide (Lys-Gly) (interchain with G-Cter in SUMO2) cross-link. The Nuclear localization signal motif lies at 469 to 478 (PPNKRMKVKH). 3 C2H2-type zinc fingers span residues 492–514 (YICI…FNIH), 520–542 (YQCR…EIHH), and 548–571 (YQCL…KSVH). Residues 512 to 637 (NIHSWEKKYQ…TSTPPQNKST (126 aa)) form a required for DNA-binding region. Residues lysine 537, lysine 568, lysine 580, lysine 609, and lysine 616 each participate in a glycyl lysine isopeptide (Lys-Gly) (interchain with G-Cter in SUMO2) cross-link.

As to quaternary structure, interacts with NCOR1. Self-associates. Interacts with CTNND1, and this interaction inhibits binding to both methylated and non-methylated DNA. Interacts with CTNND2. Interacts with KPNA2/RCH1, which may mediate nuclear import of this protein. Interacts with CBFA2T3. In terms of tissue distribution, expressed in brain, heart, kidney, liver, lung, neuromuscular junctions, skeletal muscle, spleen and testis.

It localises to the nucleus. Its function is as follows. Transcriptional regulator with bimodal DNA-binding specificity. Binds to methylated CpG dinucleotides in the consensus sequence 5'-CGCG-3' and also binds to the non-methylated consensus sequence 5'-CTGCNA-3' also known as the consensus kaiso binding site (KBS). May recruit the N-CoR repressor complex to promote histone deacetylation and the formation of repressive chromatin structures in target gene promoters. Contributes to the repression of target genes of the Wnt signaling pathway. May also activate transcription of a subset of target genes by the recruitment of CTNND2. Represses expression of MMP7 in conjunction with transcriptional corepressors CBFA2T3, CBFA2T2 and RUNX1T1. This is Transcriptional regulator Kaiso (Zbtb33) from Mus musculus (Mouse).